Consider the following 397-residue polypeptide: Galactokinase (397 aa).

Residues 1 to 27 (MGEAVGEPSASGSGSCTGRSRRGCGRR) form a disordered region. Residues 9–18 (SASGSGSCTG) show a composition bias toward low complexity. 36-39 (EHTD) provides a ligand contact to substrate. ATP-binding positions include Ser-69 and 124–130 (GAGLSSS). Mg(2+)-binding residues include Ser-130 and Glu-161. The active-site Proton acceptor is the Asp-173. Residue Tyr-225 participates in substrate binding.

Belongs to the GHMP kinase family. GalK subfamily.

The protein localises to the cytoplasm. It carries out the reaction alpha-D-galactose + ATP = alpha-D-galactose 1-phosphate + ADP + H(+). It functions in the pathway carbohydrate metabolism; galactose metabolism. Catalyzes the transfer of the gamma-phosphate of ATP to D-galactose to form alpha-D-galactose-1-phosphate (Gal-1-P). The sequence is that of Galactokinase from Streptomyces lividans.